Reading from the N-terminus, the 537-residue chain is Putative cysteine ligase BshC (537 aa).

Positions 422 to 450 form a coiled coil; sequence IEKVEGMIEQQRRLNKDLLDEVAGNQNNI.

The protein belongs to the BshC family.

Its function is as follows. Involved in bacillithiol (BSH) biosynthesis. May catalyze the last step of the pathway, the addition of cysteine to glucosamine malate (GlcN-Mal) to generate BSH. This Staphylococcus aureus (strain Mu3 / ATCC 700698) protein is Putative cysteine ligase BshC.